The primary structure comprises 543 residues: NXPE family member 4 (543 aa).

The signal sequence occupies residues 1 to 26; the sequence is MKTLASRKSLWMLLFIVIFWVSFTVF. N-linked (GlcNAc...) asparagine glycans are attached at residues N91, N159, and N223.

It belongs to the NXPE family.

The protein localises to the secreted. In Mus musculus (Mouse), this protein is NXPE family member 4 (Nxpe4).